Consider the following 359-residue polypeptide: MENHQKTSFTFEIENFSERKYLIWSPIFISGQCHWFVKVYPIKDNNYDHVSVYLHVANPQSLRPGWKRRAHFSLILSNQSGKEVKIPSDSCDLFCTELSSSYPKILPPIKLKEEGFLENDKLIITVEVKVVEVVHPGELTGKEMVEFKELQDLYNGVQQNKEVVKNCELMNMDMKQDSLKSNHHEVSLKDKKRDDADESRFQKLEERLKNLELMELDCLKSKLEEVSIKNKKADADRSRVQRLEERLKNLELMDLDCLKSKLELVSIKNKKADADRSRIQRLEERVKKLELMELDDLKSKLEEVSLERKKSDDAYRSRVYQLEECFKNLELMVLDFKVELDKKKDKSCDDGFLLVDEFA.

The MATH domain occupies 6–128 (KTSFTFEIEN…NDKLIITVEV (123 aa)). Positions 146–337 (EFKELQDLYN…NLELMVLDFK (192 aa)) form a coiled coil.

The protein is MATH domain and coiled-coil domain-containing protein At2g42475 of Arabidopsis thaliana (Mouse-ear cress).